A 316-amino-acid chain; its full sequence is Tyrosine--tRNA ligase 2 (316 aa).

L-tyrosine-binding residues include Tyr26, Tyr146, Gln150, Asp153, and Gln168. Residues 219–223 (KMSKS) carry the 'KMSKS' region motif. Lys222 lines the ATP pocket.

Belongs to the class-I aminoacyl-tRNA synthetase family. TyrS type 4 subfamily. As to quaternary structure, homodimer.

It localises to the cytoplasm. The catalysed reaction is tRNA(Tyr) + L-tyrosine + ATP = L-tyrosyl-tRNA(Tyr) + AMP + diphosphate + H(+). Its function is as follows. Catalyzes the attachment of tyrosine to tRNA(Tyr) in a two-step reaction: tyrosine is first activated by ATP to form Tyr-AMP and then transferred to the acceptor end of tRNA(Tyr). The protein is Tyrosine--tRNA ligase 2 of Pyrobaculum aerophilum (strain ATCC 51768 / DSM 7523 / JCM 9630 / CIP 104966 / NBRC 100827 / IM2).